The following is a 249-amino-acid chain: MSLVPNTICLFDVDGTLTKPRNVITPEMKDFLAGLRTKVELGVVGGSDINKIKEQLGENCINEFHYLFAENGLLSFKDGSLLATQDIKKFLGEENIKKFINFVLHYIADLDIPIKRGTFVEFRNGMINISPIGRNCSQQEREEFEKYDLEHKIRPTMVSILKEKFQSLGLQYSIGGQISFDVFPIGWDKTYCLRHLPEDKYKTIYFFGDKTFVGGNDYEIANDPRITKSFTVTSPTDTKNFLSELFYKQ.

Aspartate 12 serves as the catalytic Nucleophile. Mg(2+)-binding residues include aspartate 12 and aspartate 14. Aspartate 14 (proton donor/acceptor) is an active-site residue. Alpha-D-mannose 1-phosphate-binding residues include arginine 21, arginine 123, arginine 134, arginine 141, serine 179, and aspartate 181. Mg(2+)-binding residues include aspartate 209, aspartate 223, and threonine 227.

The protein belongs to the eukaryotic PMM family. As to quaternary structure, homodimer.

It localises to the cytoplasm. It catalyses the reaction alpha-D-mannose 1-phosphate = D-mannose 6-phosphate. Its pathway is nucleotide-sugar biosynthesis; GDP-alpha-D-mannose biosynthesis; alpha-D-mannose 1-phosphate from D-fructose 6-phosphate: step 2/2. In terms of biological role, involved in the synthesis of the GDP-mannose and dolichol-phosphate-mannose required for a number of critical mannosyl transfer reactions. The protein is Phosphomannomutase 1 (pmmA) of Dictyostelium discoideum (Social amoeba).